Consider the following 881-residue polypeptide: Tyrosine-protein kinase receptor TYRO3 (881 aa).

The first 28 residues, Met1–Ala28, serve as a signal peptide directing secretion. Ig-like C2-type domains follow at residues Leu29–Ser114 and Pro125–Glu206. The Extracellular segment spans residues Leu29–Trp414. Asn37 and Asn49 each carry an N-linked (GlcNAc...) asparagine glycan. Cys50 and Cys103 are disulfide-bonded. Residue Asn143 is glycosylated (N-linked (GlcNAc...) asparagine). Residues Cys146 and Cys189 are joined by a disulfide bond. Fibronectin type-III domains lie at Pro213 to Lys306 and Ile311 to Glu401. 4 N-linked (GlcNAc...) asparagine glycosylation sites follow: Asn216, Asn279, Asn351, and Asn365. The chain crosses the membrane as a helical span at residues Val415–Phe435. Over Leu436–Leu881 the chain is Cytoplasmic. In terms of domain architecture, Protein kinase spans Phe503 to Ile774. ATP-binding positions include Leu509–Val517 and Lys535. The active-site Proton acceptor is the Asp640. A Phosphotyrosine; by autocatalysis modification is found at Tyr671. The disordered stretch occupies residues Glu846–Leu881. Residues Glu862–Glu874 show a composition bias toward acidic residues.

It belongs to the protein kinase superfamily. Tyr protein kinase family. AXL/UFO subfamily. Tyrosine phosphorylated upon receptor stimulation.

It localises to the cell membrane. It carries out the reaction L-tyrosyl-[protein] + ATP = O-phospho-L-tyrosyl-[protein] + ADP + H(+). Its function is as follows. May be involved in cell adhesion processes, particularly in the central nervous system. This Xenopus tropicalis (Western clawed frog) protein is Tyrosine-protein kinase receptor TYRO3 (tyro3).